The sequence spans 553 residues: Transcriptional regulator HilA (553 aa).

The segment at residues 11–107 is a DNA-binding region (ompR/PhoB-type); it reads NKKFVFDDFI…LYGQGYRFNR (97 aa). D62 bears the 4-aspartylphosphate mark. One copy of the TPR repeat lies at 372 to 405; it reads ADIKYYYGWNLFMAGQLEEALQTINECLKLDPTR.

Functionally, the main transcriptional regulator of the Salmonella pathogenicity island 1 (SPI1) gene expression. Activates the expression of invasion genes by a direct action at their promoters and also indirectly by increasing the level of invF. Also binds upstream of prgH and directly activates the expression of prgHIJK operon. The polypeptide is Transcriptional regulator HilA (hilA) (Salmonella typhi).